Reading from the N-terminus, the 125-residue chain is Large ribosomal subunit protein bL12 (125 aa).

Belongs to the bacterial ribosomal protein bL12 family. In terms of assembly, homodimer. Part of the ribosomal stalk of the 50S ribosomal subunit. Forms a multimeric L10(L12)X complex, where L10 forms an elongated spine to which 2 to 4 L12 dimers bind in a sequential fashion. Binds GTP-bound translation factors.

Its function is as follows. Forms part of the ribosomal stalk which helps the ribosome interact with GTP-bound translation factors. Is thus essential for accurate translation. In Chlorobium limicola (strain DSM 245 / NBRC 103803 / 6330), this protein is Large ribosomal subunit protein bL12.